The following is a 932-amino-acid chain: 2-oxoglutarate dehydrogenase E1 component (932 aa).

It belongs to the alpha-ketoglutarate dehydrogenase family. In terms of assembly, homodimer. Part of the 2-oxoglutarate dehydrogenase (OGDH) complex composed of E1 (2-oxoglutarate dehydrogenase), E2 (dihydrolipoamide succinyltransferase) and E3 (dihydrolipoamide dehydrogenase); the complex contains multiple copies of the three enzymatic components (E1, E2 and E3). Thiamine diphosphate is required as a cofactor.

It catalyses the reaction N(6)-[(R)-lipoyl]-L-lysyl-[protein] + 2-oxoglutarate + H(+) = N(6)-[(R)-S(8)-succinyldihydrolipoyl]-L-lysyl-[protein] + CO2. Functionally, E1 component of the 2-oxoglutarate dehydrogenase (OGDH) complex which catalyzes the decarboxylation of 2-oxoglutarate, the first step in the conversion of 2-oxoglutarate to succinyl-CoA and CO(2). The polypeptide is 2-oxoglutarate dehydrogenase E1 component (Staphylococcus aureus (strain bovine RF122 / ET3-1)).